Here is a 129-residue protein sequence, read N- to C-terminus: RutC family protein PM1466 (129 aa).

It belongs to the RutC family.

In Pasteurella multocida (strain Pm70), this protein is RutC family protein PM1466.